A 342-amino-acid chain; its full sequence is Protein pelota homolog (342 aa).

The protein belongs to the eukaryotic release factor 1 family. Pelota subfamily. As to quaternary structure, monomer. A divalent metal cation is required as a cofactor.

It is found in the cytoplasm. In terms of biological role, may function in recognizing stalled ribosomes, interact with stem-loop structures in stalled mRNA molecules, and effect endonucleolytic cleavage of the mRNA. May play a role in the release non-functional ribosomes and degradation of damaged mRNAs. Has endoribonuclease activity. This chain is Protein pelota homolog, found in Methanocorpusculum labreanum (strain ATCC 43576 / DSM 4855 / Z).